The chain runs to 301 residues: Glycine--tRNA ligase alpha subunit (301 aa).

This sequence belongs to the class-II aminoacyl-tRNA synthetase family. In terms of assembly, tetramer of two alpha and two beta subunits.

It is found in the cytoplasm. The catalysed reaction is tRNA(Gly) + glycine + ATP = glycyl-tRNA(Gly) + AMP + diphosphate. The protein is Glycine--tRNA ligase alpha subunit of Campylobacter hominis (strain ATCC BAA-381 / DSM 21671 / CCUG 45161 / LMG 19568 / NCTC 13146 / CH001A).